A 282-amino-acid chain; its full sequence is MAVRKLKPTSAGRRFQTVSDFEEITRTRPEKSLTVGLTKKSGRNNLGRITSRRRGGGVKRLYRIIDFKRDKTGIEARVAHIEYDPNRTARIALLHYTDGEKRYILAPVGLKQGDVVMSGVNDRNGEVADIMPGNALPMQRIPVGTVIHNIELYPGKGGQLCRAAGTYAQLVAKEGKYALLRLPSGEVRKVLVTCVATVGQVGNVHHESIRLGKAGRNRWLGRRPKVRGVAMNPIDHPLGGGEGRSSGGRHPVSPWGMPAKGYKTRDKKKASSRLIVKRRGQK.

The interval 230–282 is disordered; that stretch reads AMNPIDHPLGGGEGRSSGGRHPVSPWGMPAKGYKTRDKKKASSRLIVKRRGQK. Basic residues predominate over residues 265-282; sequence RDKKKASSRLIVKRRGQK.

This sequence belongs to the universal ribosomal protein uL2 family. In terms of assembly, part of the 50S ribosomal subunit. Forms a bridge to the 30S subunit in the 70S ribosome.

One of the primary rRNA binding proteins. Required for association of the 30S and 50S subunits to form the 70S ribosome, for tRNA binding and peptide bond formation. It has been suggested to have peptidyltransferase activity; this is somewhat controversial. Makes several contacts with the 16S rRNA in the 70S ribosome. The protein is Large ribosomal subunit protein uL2 of Desulfovibrio desulfuricans (strain ATCC 27774 / DSM 6949 / MB).